Reading from the N-terminus, the 294-residue chain is tRNA pseudouridine synthase B (294 aa).

Asp39 (nucleophile) is an active-site residue.

The protein belongs to the pseudouridine synthase TruB family. Type 1 subfamily.

The enzyme catalyses uridine(55) in tRNA = pseudouridine(55) in tRNA. Functionally, responsible for synthesis of pseudouridine from uracil-55 in the psi GC loop of transfer RNAs. This chain is tRNA pseudouridine synthase B, found in Streptococcus agalactiae serotype Ia (strain ATCC 27591 / A909 / CDC SS700).